Reading from the N-terminus, the 216-residue chain is UDP-N-acetylglucosamine transferase subunit ALG14 (216 aa).

Residues Met-1–Cys-3 lie on the Lumenal side of the membrane. Residues Val-4–Val-24 traverse the membrane as a helical segment. Residues Val-25–Val-216 are Cytoplasmic-facing.

The protein belongs to the ALG14 family. In terms of assembly, forms with ALG13 the active heterodimeric UDP-N-acetylglucosamine transferase complex.

It is found in the endoplasmic reticulum membrane. Part of the UDP-N-acetylglucosamine transferase complex that operates in the biosynthetic pathway of dolichol-linked oligosaccharides, the glycan precursors employed in protein asparagine (N)-glycosylation. The assembly of dolichol-linked oligosaccharides begins on the cytosolic side of the endoplasmic reticulum membrane and finishes in its lumen. The sequential addition of sugars to dolichol pyrophosphate produces dolichol-linked oligosaccharides containing fourteen sugars, including two GlcNAcs, nine mannoses and three glucoses. Once assembled, the oligosaccharides are transferred from the lipid to nascent proteins by oligosaccharyltransferases. Functions as a protein-membrane adapter recruiting ALG13 at the cytoplasmic face of the endoplasmic reticulum, where the complex catalyzes the second step of dolichol pyrophosphate biosynthesis, transferring a beta1,4-linked N-acetylglucosamine (GlcNAc) from UDP-GlcNAc to GlcNAc-pyrophosphatedolichol (Gn-PDol) to produce N,N'-diacetylchitobiosyl diphosphodolichol. N,N'-diacetylchitobiosyl diphosphodolichol is a substrate for ALG1, the following enzyme in the biosynthetic pathway. The sequence is that of UDP-N-acetylglucosamine transferase subunit ALG14 from Homo sapiens (Human).